Here is a 328-residue protein sequence, read N- to C-terminus: MRAPGFWHEPAGVASTLLAPLGALYAAGTARRLRTGPRVRVDVPVICIGNINAGGTGKTPTAIALAQRLLAKGVKVHAVTRGYGGEVEGPLCVEERTHTAKQVGDEALLLSAFLPTWVSTDRQAGARAAVADGAECLILDDGFQNPALAYDLSIVVVDAWRGFGNGRVIPAGPLREPVEIGLKRADIVLSIGPDAAQQRFATTWGRHIAVPHLTGTLQPLPTGLPLDGLPVLAFAGIGHPEKFFQTLRSLGADLHATHALADHQPLTDTLMIRLLRDASMRGAQVVTTEKDAVRLSPEFRAQVMTVPVRLEVDDWGPLDSAVDKVLGR.

52–59 (NAGGTGKT) serves as a coordination point for ATP.

It belongs to the LpxK family.

It catalyses the reaction a lipid A disaccharide + ATP = a lipid IVA + ADP + H(+). It functions in the pathway glycolipid biosynthesis; lipid IV(A) biosynthesis; lipid IV(A) from (3R)-3-hydroxytetradecanoyl-[acyl-carrier-protein] and UDP-N-acetyl-alpha-D-glucosamine: step 6/6. In terms of biological role, transfers the gamma-phosphate of ATP to the 4'-position of a tetraacyldisaccharide 1-phosphate intermediate (termed DS-1-P) to form tetraacyldisaccharide 1,4'-bis-phosphate (lipid IVA). The chain is Tetraacyldisaccharide 4'-kinase from Jannaschia sp. (strain CCS1).